A 375-amino-acid polypeptide reads, in one-letter code: POU domain, class 3, transcription factor 1-B (375 aa).

Disordered stretches follow at residues 1–29 (MAATAQYLPRNNSLPSNPLMHPDSDRMHQ), 56–139 (MSLT…QPLI), and 151–200 (MLGP…PSSD). Polar residues-rich tracts occupy residues 107-117 (VHQQTPSSHAW), 129-139 (SPGSNSHQPLI), and 151-160 (MLGPQASSLH). Residues 162 to 178 (SMRDPLHDDPGVHDTHV) show a composition bias toward basic and acidic residues. Residues 194-268 (EDAPSSDDLE…LLNKWLEETD (75 aa)) form the POU-specific domain. The homeobox DNA-binding region spans 286–345 (KRKKRTSIEVGVKGALENHFLKCPKPSAHEITSLADSLQLEKEVVRVWFCNRRQKEKRMT).

It belongs to the POU transcription factor family. Class-3 subfamily.

The protein resides in the nucleus. Acts as a transcription factor. May play a role in neuronal differentiation. The chain is POU domain, class 3, transcription factor 1-B (pou3f1-b) from Xenopus laevis (African clawed frog).